We begin with the raw amino-acid sequence, 105 residues long: Phosphoribosyl-AMP cyclohydrolase (105 aa).

Asp72 is a binding site for Mg(2+). Cys73 is a Zn(2+) binding site. Residues Asp74 and Asp76 each contribute to the Mg(2+) site. The Zn(2+) site is built by Cys89 and Cys96.

It belongs to the PRA-CH family. Homodimer. Mg(2+) is required as a cofactor. Requires Zn(2+) as cofactor.

The protein localises to the cytoplasm. The enzyme catalyses 1-(5-phospho-beta-D-ribosyl)-5'-AMP + H2O = 1-(5-phospho-beta-D-ribosyl)-5-[(5-phospho-beta-D-ribosylamino)methylideneamino]imidazole-4-carboxamide. It functions in the pathway amino-acid biosynthesis; L-histidine biosynthesis; L-histidine from 5-phospho-alpha-D-ribose 1-diphosphate: step 3/9. Its function is as follows. Catalyzes the hydrolysis of the adenine ring of phosphoribosyl-AMP. In Listeria monocytogenes serotype 4a (strain HCC23), this protein is Phosphoribosyl-AMP cyclohydrolase.